Consider the following 311-residue polypeptide: Probable flavin reductase (311 aa).

FMN contacts are provided by residues 38 to 41 (TANS), 55 to 61 (CLAKSSR), 88 to 89 (FA), and Arg95.

It belongs to the non-flavoprotein flavin reductase family.

This Rhizobium meliloti (strain 1021) (Ensifer meliloti) protein is Probable flavin reductase.